A 360-amino-acid chain; its full sequence is Phospho-N-acetylmuramoyl-pentapeptide-transferase (360 aa).

10 helical membrane passes run 21–41 (YLSFRAIVSILTALGISLWMG), 73–93 (TMGGVMILAAITITVLLWADL), 94–114 (TNPYVWAVLAVLLGYGAVGFV), 132–152 (WKYFWQSAIALVVAFALYAHG), 168–188 (VMPQLGLMYIVLTYFVIVGTS), 199–219 (GLAIMPTVLVAAGFAAIAWAT), 239–259 (LVVVCTAMVGAGLGFLWFNTY), 263–283 (VFMGDVGALALGGALGTIAVL), 288–308 (FVLVIMGGVFVMETLSVILQV), and 338–358 (VIVRFWVISIVLVLIGLATLK).

It belongs to the glycosyltransferase 4 family. MraY subfamily. Mg(2+) serves as cofactor.

The protein resides in the cell inner membrane. It carries out the reaction UDP-N-acetyl-alpha-D-muramoyl-L-alanyl-gamma-D-glutamyl-meso-2,6-diaminopimeloyl-D-alanyl-D-alanine + di-trans,octa-cis-undecaprenyl phosphate = di-trans,octa-cis-undecaprenyl diphospho-N-acetyl-alpha-D-muramoyl-L-alanyl-D-glutamyl-meso-2,6-diaminopimeloyl-D-alanyl-D-alanine + UMP. Its pathway is cell wall biogenesis; peptidoglycan biosynthesis. In terms of biological role, catalyzes the initial step of the lipid cycle reactions in the biosynthesis of the cell wall peptidoglycan: transfers peptidoglycan precursor phospho-MurNAc-pentapeptide from UDP-MurNAc-pentapeptide onto the lipid carrier undecaprenyl phosphate, yielding undecaprenyl-pyrophosphoryl-MurNAc-pentapeptide, known as lipid I. The protein is Phospho-N-acetylmuramoyl-pentapeptide-transferase of Vibrio cholerae serotype O1 (strain ATCC 39541 / Classical Ogawa 395 / O395).